Reading from the N-terminus, the 120-residue chain is Large ribosomal subunit protein uL22 (120 aa).

A disordered region spans residues 1 to 22; sequence MLVNRRYTAKGKNLPSSPKKVR.

It belongs to the universal ribosomal protein uL22 family. As to quaternary structure, part of the 50S ribosomal subunit.

Functionally, this protein binds specifically to 23S rRNA; its binding is stimulated by other ribosomal proteins, e.g. L4, L17, and L20. It is important during the early stages of 50S assembly. It makes multiple contacts with different domains of the 23S rRNA in the assembled 50S subunit and ribosome. Its function is as follows. The globular domain of the protein is located near the polypeptide exit tunnel on the outside of the subunit, while an extended beta-hairpin is found that lines the wall of the exit tunnel in the center of the 70S ribosome. In Borreliella burgdorferi (strain ATCC 35210 / DSM 4680 / CIP 102532 / B31) (Borrelia burgdorferi), this protein is Large ribosomal subunit protein uL22.